A 613-amino-acid polypeptide reads, in one-letter code: DBH-like monooxygenase protein 1 (613 aa).

An N-terminal signal peptide occupies residues 1 to 19 (MCGWPLLVLWALLPATAAG). Over 20-587 (SPGRSYPHRV…PLVCEKAASP (568 aa)) the chain is Lumenal. In terms of domain architecture, DOMON spans 35–148 (GKYWLHWGRQ…STVRVIWAYH (114 aa)). Asn-114 carries an N-linked (GlcNAc...) asparagine glycan. The active site involves Tyr-203. 2 disulfide bridges follow: Cys-205–Cys-257 and Cys-242–Cys-269. Cu cation contacts are provided by His-235 and His-236. The N-linked (GlcNAc...) asparagine glycan is linked to Asn-247. Cu cation is bound by residues His-307, His-389, His-391, and Met-464. Intrachain disulfides connect Cys-364-Cys-480, Cys-368-Cys-550, and Cys-443-Cys-465. His-389 is an active-site residue. Residues Asn-476 and Asn-517 are each glycosylated (N-linked (GlcNAc...) asparagine). A helical membrane pass occupies residues 588–608 (PLHGIFSLRLLTCALLLGSML).

This sequence belongs to the copper type II ascorbate-dependent monooxygenase family. Cu(2+) is required as a cofactor. In terms of processing, N-glycosylated. As to expression, broadly exprressed, with highest levels in salivary gland and ovary.

It is found in the endoplasmic reticulum membrane. The protein is DBH-like monooxygenase protein 1 (Moxd1) of Mus musculus (Mouse).